Consider the following 349-residue polypeptide: DNA-directed RNA polymerase subunit alpha (349 aa).

The tract at residues 1–226 is alpha N-terminal domain (alpha-NTD); sequence MLIAQRPTLV…GLFGLAQELN (226 aa). The alpha C-terminal domain (alpha-CTD) stretch occupies residues 241–349; sequence AALAADLALP…GAEFVETEQY (109 aa). Residues 308–349 are disordered; the sequence is LKDSPPGFDPRQAVDTYGTDSYNPAFSDPSDDGAEFVETEQY. The segment covering 336–349 has biased composition (acidic residues); sequence PSDDGAEFVETEQY.

It belongs to the RNA polymerase alpha chain family. Homodimer. The RNAP catalytic core consists of 2 alpha, 1 beta, 1 beta' and 1 omega subunit. When a sigma factor is associated with the core the holoenzyme is formed, which can initiate transcription.

It carries out the reaction RNA(n) + a ribonucleoside 5'-triphosphate = RNA(n+1) + diphosphate. Its function is as follows. DNA-dependent RNA polymerase catalyzes the transcription of DNA into RNA using the four ribonucleoside triphosphates as substrates. This chain is DNA-directed RNA polymerase subunit alpha, found in Frankia alni (strain DSM 45986 / CECT 9034 / ACN14a).